The following is a 49-amino-acid chain: uncharacterized protein (49 aa).

This is an uncharacterized protein from Sulfolobus islandicus filamentous virus (isolate Iceland/Hveragerdi) (SIFV).